Reading from the N-terminus, the 276-residue chain is MEVRFAMHPSQFKALTTEQIRKEFLIENLFEYGKINMVYTHVDRVIVGSAVPTVEALVLEDGSQIGAQYFLERREIGIINIGSRGYVIADGQKFELDKKDGLYVGMSTKKLEFGSDDPSNPAKFYFVSTPAHKQYPTEKIDIKQTEATHLGSLSESNERTIYKYIHPDGVKSCQLVMGMTILEPNNVWNTMPCHLHDRRMEVYFYFDMPEDAFVLHLMGEPNETRHIIVRNEQAVISPSWSIHSGVGTKNYTFIWAMAGENQSYSDISPVPMKELK.

Positions 194, 196, 201, and 243 each coordinate Zn(2+).

Belongs to the KduI family. Zn(2+) is required as a cofactor.

It carries out the reaction 5-dehydro-4-deoxy-D-glucuronate = 3-deoxy-D-glycero-2,5-hexodiulosonate. It participates in glycan metabolism; pectin degradation; 2-dehydro-3-deoxy-D-gluconate from pectin: step 4/5. Its function is as follows. Catalyzes the isomerization of 5-dehydro-4-deoxy-D-glucuronate to 3-deoxy-D-glycero-2,5-hexodiulosonate. This Caldicellulosiruptor bescii (strain ATCC BAA-1888 / DSM 6725 / KCTC 15123 / Z-1320) (Anaerocellum thermophilum) protein is 4-deoxy-L-threo-5-hexosulose-uronate ketol-isomerase.